The primary structure comprises 232 residues: Ubiquinone biosynthesis O-methyltransferase (232 aa).

S-adenosyl-L-methionine-binding residues include Arg-36, Gly-55, Asp-76, and Leu-120.

Belongs to the methyltransferase superfamily. UbiG/COQ3 family.

It carries out the reaction a 3-demethylubiquinol + S-adenosyl-L-methionine = a ubiquinol + S-adenosyl-L-homocysteine + H(+). It catalyses the reaction a 3-(all-trans-polyprenyl)benzene-1,2-diol + S-adenosyl-L-methionine = a 2-methoxy-6-(all-trans-polyprenyl)phenol + S-adenosyl-L-homocysteine + H(+). It participates in cofactor biosynthesis; ubiquinone biosynthesis. In terms of biological role, O-methyltransferase that catalyzes the 2 O-methylation steps in the ubiquinone biosynthetic pathway. This chain is Ubiquinone biosynthesis O-methyltransferase, found in Pseudomonas syringae pv. tomato (strain ATCC BAA-871 / DC3000).